Here is a 58-residue protein sequence, read N- to C-terminus: UPF0434 protein NT01EI_2448 (58 aa).

The protein belongs to the UPF0434 family.

The protein is UPF0434 protein NT01EI_2448 of Edwardsiella ictaluri (strain 93-146).